Reading from the N-terminus, the 203-residue chain is V-type ATP synthase subunit D (203 aa).

The protein belongs to the V-ATPase D subunit family.

In terms of biological role, produces ATP from ADP in the presence of a proton gradient across the membrane. This chain is V-type ATP synthase subunit D, found in Streptococcus pneumoniae serotype 19F (strain G54).